The sequence spans 1409 residues: DNA-directed RNA polymerase subunit beta' (1409 aa).

Zn(2+) contacts are provided by cysteine 70, cysteine 72, cysteine 85, and cysteine 88. Residues aspartate 458, aspartate 460, and aspartate 462 each contribute to the Mg(2+) site. Residues cysteine 813, cysteine 887, cysteine 894, and cysteine 897 each coordinate Zn(2+).

The protein belongs to the RNA polymerase beta' chain family. In terms of assembly, the RNAP catalytic core consists of 2 alpha, 1 beta, 1 beta' and 1 omega subunit. When a sigma factor is associated with the core the holoenzyme is formed, which can initiate transcription. Mg(2+) is required as a cofactor. The cofactor is Zn(2+).

It carries out the reaction RNA(n) + a ribonucleoside 5'-triphosphate = RNA(n+1) + diphosphate. Its function is as follows. DNA-dependent RNA polymerase catalyzes the transcription of DNA into RNA using the four ribonucleoside triphosphates as substrates. This chain is DNA-directed RNA polymerase subunit beta', found in Delftia acidovorans (strain DSM 14801 / SPH-1).